The sequence spans 383 residues: Dual-specificity RNA methyltransferase RlmN (383 aa).

Catalysis depends on Glu-93, which acts as the Proton acceptor. In terms of domain architecture, Radical SAM core spans 99-339 (EETRGTLCVS…TTIRKTRGDD (241 aa)). Cys-106 and Cys-344 are joined by a disulfide. Positions 113, 117, and 120 each coordinate [4Fe-4S] cluster. Residues 170 to 171 (GE), Ser-202, 224 to 226 (SLH), and Asn-301 contribute to the S-adenosyl-L-methionine site. Cys-344 functions as the S-methylcysteine intermediate in the catalytic mechanism.

It belongs to the radical SAM superfamily. RlmN family. [4Fe-4S] cluster is required as a cofactor.

Its subcellular location is the cytoplasm. It carries out the reaction adenosine(2503) in 23S rRNA + 2 reduced [2Fe-2S]-[ferredoxin] + 2 S-adenosyl-L-methionine = 2-methyladenosine(2503) in 23S rRNA + 5'-deoxyadenosine + L-methionine + 2 oxidized [2Fe-2S]-[ferredoxin] + S-adenosyl-L-homocysteine. It catalyses the reaction adenosine(37) in tRNA + 2 reduced [2Fe-2S]-[ferredoxin] + 2 S-adenosyl-L-methionine = 2-methyladenosine(37) in tRNA + 5'-deoxyadenosine + L-methionine + 2 oxidized [2Fe-2S]-[ferredoxin] + S-adenosyl-L-homocysteine. Specifically methylates position 2 of adenine 2503 in 23S rRNA and position 2 of adenine 37 in tRNAs. m2A2503 modification seems to play a crucial role in the proofreading step occurring at the peptidyl transferase center and thus would serve to optimize ribosomal fidelity. This chain is Dual-specificity RNA methyltransferase RlmN, found in Ralstonia nicotianae (strain ATCC BAA-1114 / GMI1000) (Ralstonia solanacearum).